A 207-amino-acid chain; its full sequence is Outer-membrane lipoprotein LolB (207 aa).

The signal sequence occupies residues 1–23 (MPTMNRSRRLALLCLGAPLLLAA). The N-palmitoyl cysteine moiety is linked to residue Cys-24. The S-diacylglycerol cysteine moiety is linked to residue Cys-24. The interval 171–207 (PSASQAPAPRPRRIDLEREGGPTPLAVKLVIDPEEAP) is disordered.

It belongs to the LolB family. As to quaternary structure, monomer.

Its subcellular location is the cell outer membrane. Functionally, plays a critical role in the incorporation of lipoproteins in the outer membrane after they are released by the LolA protein. This chain is Outer-membrane lipoprotein LolB, found in Cupriavidus pinatubonensis (strain JMP 134 / LMG 1197) (Cupriavidus necator (strain JMP 134)).